A 730-amino-acid chain; its full sequence is ABC transporter G family member 3 (730 aa).

The segment covering 1-28 (MEEIQSQSDLYRSSSSSASSPTSRVPSS) has biased composition (low complexity). The segment at 1–100 (MEEIQSQSDL…MASPPVPEGG (100 aa)) is disordered. Acidic residues predominate over residues 47 to 56 (DSPEWEDTPD). Polar residues predominate over residues 72-91 (NDATTTPVSPSLSKMNSGSM). S93 is modified (phosphoserine). One can recognise an ABC transporter domain in the interval 114–356 (IAWKDLTVTM…FSNAGFPCPI (243 aa)). 151–158 (GPAKSGKS) serves as a coordination point for ATP. The 213-residue stretch at 441–653 (TRVAVLTWRS…SIEGLLENEY (213 aa)) folds into the ABC transmembrane type-2 domain. Helical transmembrane passes span 465-485 (LILY…LGHS), 495-515 (AVFV…PSLL), 532-552 (AFVF…LMSI), 575-595 (VLNF…IACI), 600-620 (YWST…AGHF), and 689-709 (MLVL…LLRF).

Belongs to the ABC transporter superfamily. ABCG family. Eye pigment precursor importer (TC 3.A.1.204) subfamily.

Its subcellular location is the membrane. In Arabidopsis thaliana (Mouse-ear cress), this protein is ABC transporter G family member 3 (ABCG3).